Here is a 352-residue protein sequence, read N- to C-terminus: Ferrochelatase (352 aa).

Residues histidine 222 and glutamate 303 each coordinate Fe cation.

The protein belongs to the ferrochelatase family.

The protein resides in the cytoplasm. The enzyme catalyses heme b + 2 H(+) = protoporphyrin IX + Fe(2+). Its pathway is porphyrin-containing compound metabolism; protoheme biosynthesis; protoheme from protoporphyrin-IX: step 1/1. Catalyzes the ferrous insertion into protoporphyrin IX. This Brucella abortus (strain S19) protein is Ferrochelatase.